Reading from the N-terminus, the 372-residue chain is Probable inactive receptor-like protein kinase At1g65250 (372 aa).

Residues 1–4 and lysine 38 each bind ATP; that span reads MGWL. The region spanning 1–314 is the Protein kinase domain; sequence MGWLRKKKKP…QERCQMKAFL (314 aa). Phosphotyrosine occurs at positions 128 and 221. The segment at 348–372 is disordered; sequence SSSLSSGQTQLDSAQDISSTVVLSN. The span at 354–372 shows a compositional bias: polar residues; sequence GQTQLDSAQDISSTVVLSN.

Belongs to the protein kinase superfamily.

The chain is Probable inactive receptor-like protein kinase At1g65250 from Arabidopsis thaliana (Mouse-ear cress).